A 355-amino-acid polypeptide reads, in one-letter code: Phenylalanine--tRNA ligase alpha subunit (355 aa).

Mg(2+) is bound at residue glutamate 273.

This sequence belongs to the class-II aminoacyl-tRNA synthetase family. Phe-tRNA synthetase alpha subunit type 1 subfamily. Tetramer of two alpha and two beta subunits. The cofactor is Mg(2+).

It is found in the cytoplasm. The enzyme catalyses tRNA(Phe) + L-phenylalanine + ATP = L-phenylalanyl-tRNA(Phe) + AMP + diphosphate + H(+). This Bifidobacterium longum subsp. infantis (strain ATCC 15697 / DSM 20088 / JCM 1222 / NCTC 11817 / S12) protein is Phenylalanine--tRNA ligase alpha subunit.